The following is a 138-amino-acid chain: uncharacterized protein (138 aa).

A disordered region spans residues 1–27 (MEGELIENNGLDIYDTSETPKKRGRPA).

This is an uncharacterized protein from Escherichia coli (strain K12).